A 757-amino-acid polypeptide reads, in one-letter code: Xaa-Pro dipeptidyl-peptidase (757 aa).

Active-site charge relay system residues include serine 348, aspartate 468, and histidine 498.

This sequence belongs to the peptidase S15 family. As to quaternary structure, homodimer.

The protein localises to the cytoplasm. It catalyses the reaction Hydrolyzes Xaa-Pro-|- bonds to release unblocked, N-terminal dipeptides from substrates including Ala-Pro-|-p-nitroanilide and (sequentially) Tyr-Pro-|-Phe-Pro-|-Gly-Pro-|-Ile.. Removes N-terminal dipeptides sequentially from polypeptides having unsubstituted N-termini provided that the penultimate residue is proline. In Streptococcus pneumoniae serotype 19F (strain G54), this protein is Xaa-Pro dipeptidyl-peptidase.